A 796-amino-acid chain; its full sequence is Conidiophore development regulator abaA (796 aa).

Residues 133–207 (GKDGEPVWSD…QVLDSFLKGD (75 aa)) constitute a DNA-binding region (TEA). The disordered stretch occupies residues 215–254 (REQSDRSTAQTQPVGPRWRTSMDHLPSSHYGTHATSSYPE). The segment covering 243–252 (HYGTHATSSY) has biased composition (polar residues). The tract at residues 341–362 (LSDVNDPLNCEIILLETNLELM) is leucine-zipper-like. The disordered stretch occupies residues 612–643 (EGLSDKTAPTSVLDPFPNLTQQTTSQTAGINV). A compositionally biased stretch (polar residues) spans 629–643 (NLTQQTTSQTAGINV).

This sequence belongs to the TEC1 family.

The protein localises to the nucleus. Its function is as follows. BrlA, abaA and wetA are pivotal regulators of conidiophore development and conidium maturation. They act individually and together to regulate their own expression and that of numerous other sporulation-specific gene. Controls temporal and spatial specificity in Aspergillus development. Directs the differentiation of phialides and is continuously required for maintenance of their function. Expression of abaA leads to activation of brlA and wetA, cessation of vegetative growth, and accentuated cellular vacuolization. Binds to the sequence 5'-CATTCY-3', where Y is a pyrimidine, making both major- and minor-groove contacts. Multiple abaA binding sites are present in the cis-acting regulatory regions of several developmentally controlled structural genes as well as those of the upstream regulatory gene brlA, the downstream regulatory gene wetA, and abaA itself. The protein is Conidiophore development regulator abaA of Emericella nidulans (strain FGSC A4 / ATCC 38163 / CBS 112.46 / NRRL 194 / M139) (Aspergillus nidulans).